The chain runs to 127 residues: UPF0102 protein ERGA_CDS_00540 (127 aa).

Belongs to the UPF0102 family.

This chain is UPF0102 protein ERGA_CDS_00540, found in Ehrlichia ruminantium (strain Gardel).